Consider the following 150-residue polypeptide: Cytochrome c oxidase subunit 5A, mitochondrial (150 aa).

The N-terminal 41 residues, 1–41 (MLGAALRRCAVAATTWAGPRGLLHSARTPGPAAAIQSVRCY), are a transit peptide targeting the mitochondrion. Positions 2–20 (LGAALRRCAVAATTWAGPR) match the SIFI-degron motif. K87 and K113 each carry N6-acetyllysine. Phosphothreonine is present on T141.

Belongs to the cytochrome c oxidase subunit 5A family. In terms of assembly, component of the cytochrome c oxidase (complex IV, CIV), a multisubunit enzyme composed of 14 subunits. The complex is composed of a catalytic core of 3 subunits MT-CO1, MT-CO2 and MT-CO3, encoded in the mitochondrial DNA, and 11 supernumerary subunits COX4I, COX5A, COX5B, COX6A, COX6B, COX6C, COX7A, COX7B, COX7C, COX8 and NDUFA4, which are encoded in the nuclear genome. The complex exists as a monomer or a dimer and forms supercomplexes (SCs) in the inner mitochondrial membrane with NADH-ubiquinone oxidoreductase (complex I, CI) and ubiquinol-cytochrome c oxidoreductase (cytochrome b-c1 complex, complex III, CIII), resulting in different assemblies (supercomplex SCI(1)III(2)IV(1) and megacomplex MCI(2)III(2)IV(2)). Interacts with AFG1L. Interacts with RAB5IF. Post-translationally, in response to mitochondrial stress, the precursor protein is ubiquitinated by the SIFI complex in the cytoplasm before mitochondrial import, leading to its degradation. Within the SIFI complex, UBR4 initiates ubiquitin chain that are further elongated or branched by KCMF1.

The protein resides in the mitochondrion inner membrane. Its pathway is energy metabolism; oxidative phosphorylation. Its function is as follows. Component of the cytochrome c oxidase, the last enzyme in the mitochondrial electron transport chain which drives oxidative phosphorylation. The respiratory chain contains 3 multisubunit complexes succinate dehydrogenase (complex II, CII), ubiquinol-cytochrome c oxidoreductase (cytochrome b-c1 complex, complex III, CIII) and cytochrome c oxidase (complex IV, CIV), that cooperate to transfer electrons derived from NADH and succinate to molecular oxygen, creating an electrochemical gradient over the inner membrane that drives transmembrane transport and the ATP synthase. Cytochrome c oxidase is the component of the respiratory chain that catalyzes the reduction of oxygen to water. Electrons originating from reduced cytochrome c in the intermembrane space (IMS) are transferred via the dinuclear copper A center (CU(A)) of subunit 2 and heme A of subunit 1 to the active site in subunit 1, a binuclear center (BNC) formed by heme A3 and copper B (CU(B)). The BNC reduces molecular oxygen to 2 water molecules using 4 electrons from cytochrome c in the IMS and 4 protons from the mitochondrial matrix. The protein is Cytochrome c oxidase subunit 5A, mitochondrial (COX5A) of Macaca mulatta (Rhesus macaque).